The sequence spans 97 residues: Citrate lyase acyl carrier protein (97 aa).

O-(phosphoribosyl dephospho-coenzyme A)serine is present on Ser-14.

This sequence belongs to the CitD family. In terms of assembly, oligomer with a subunit composition of (alpha,beta,gamma)6.

It localises to the cytoplasm. Functionally, covalent carrier of the coenzyme of citrate lyase. The polypeptide is Citrate lyase acyl carrier protein (Leuconostoc citreum (strain KM20)).